The sequence spans 579 residues: Probable N-acetylgalactosaminyltransferase 9 (579 aa).

Residues 1–12 (MLRYIIPRKKGT) are Cytoplasmic-facing. Residues 13-30 (FVIAAFLTVAFFCIVAYH) form a helical; Signal-anchor for type II membrane protein membrane-spanning segment. Residues 31 to 579 (RNDRRRTKFQ…KWNFIDPAKA (549 aa)) are Lumenal-facing. Residue Asn67 is glycosylated (N-linked (GlcNAc...) asparagine). Disulfide bonds link Cys123–Cys356, Cys347–Cys427, Cys464–Cys483, Cys507–Cys520, and Cys545–Cys562. The segment at 133-243 (LPKTSVIIIF…HGWLEPIVQR (111 aa)) is catalytic subdomain A. 2 residues coordinate substrate: Asp174 and Arg204. Asp227 serves as a coordination point for Mn(2+). Ser228 lines the substrate pocket. His229 serves as a coordination point for Mn(2+). Residues 302–364 (YIRSPTMAGG…PCSHVGHIFR (63 aa)) form a catalytic subdomain B region. Trp333 contacts substrate. Mn(2+) is bound at residue His361. Substrate contacts are provided by Arg364, His367, and Tyr369. An N-linked (GlcNAc...) asparagine glycan is attached at Asn370. A Ricin B-type lectin domain is found at 450–574 (AYGALHTVVS…KDEHQKWNFI (125 aa)).

Belongs to the glycosyltransferase 2 family. GalNAc-T subfamily. It depends on Mn(2+) as a cofactor.

It localises to the golgi apparatus membrane. It participates in protein modification; protein glycosylation. Probable glycopeptide transferase involved in O-linked oligosaccharide biosynthesis. Glycopeptide transferases catalyze the transfer of an N-acetyl-D-galactosamine residue to an already glycosylated peptide. In contrast to other members of the family, it does not act as a peptide transferase that transfers GalNAc onto serine or threonine residue on peptides that have been tested. Some peptide transferase activity is however not excluded, considering that its appropriate peptide substrate may remain unidentified. The sequence is that of Probable N-acetylgalactosaminyltransferase 9 (gly-9) from Caenorhabditis elegans.